The primary structure comprises 227 residues: Esterase OVCA2 (227 aa).

Catalysis depends on charge relay system residues serine 120, aspartate 180, and histidine 207.

It belongs to the LovG family.

The enzyme catalyses a carboxylic ester + H2O = an alcohol + a carboxylate + H(+). In terms of biological role, exhibits ester hydrolase activity with a strong preference for long-chain alkyl ester substrates and high selectivity against a variety of short, branched, and substituted esters. Is able to hydrolyze ester bonds within a wide range of p-nitrophenyl derivatives (C2-C14) in vitro, with a strong preference toward substrates of &gt;8 carbons. This is Esterase OVCA2 (ovca2) from Danio rerio (Zebrafish).